The following is a 213-amino-acid chain: MDARILQDNDDTSLPVNQASVTRIHKKPGKAEAEAAVRTLLLWAGEDPDREGLLETPKRVAKAYQELFGGYSESPEEVLGTTFEEVAGYDDMVLVKDISFFSHCEHHMVPIIGKAHVAYLPEGRVVGLSKIARVVDIFARRLQTQESITAQIADSMQRILKPRGVAVMIEAEHMCMAMRSIRKQGSSTITTTFTGDFKEKADQQVRFMTLIRT.

The Zn(2+) site is built by Cys104, His107, and Cys175.

This sequence belongs to the GTP cyclohydrolase I family. Homomer.

The catalysed reaction is GTP + H2O = 7,8-dihydroneopterin 3'-triphosphate + formate + H(+). It functions in the pathway cofactor biosynthesis; 7,8-dihydroneopterin triphosphate biosynthesis; 7,8-dihydroneopterin triphosphate from GTP: step 1/1. This is GTP cyclohydrolase 1 from Brucella canis (strain ATCC 23365 / NCTC 10854 / RM-666).